The chain runs to 187 residues: RNA pyrophosphohydrolase (187 aa).

The 144-residue stretch at 6-149 folds into the Nudix hydrolase domain; it reads GYRANVGIIL…KRQVYRLALT (144 aa). A Nudix box motif is present at residues 38–59; that stretch reads GGIKSGETPTQAMYRELAEETG.

The protein belongs to the Nudix hydrolase family. RppH subfamily. A divalent metal cation is required as a cofactor.

Accelerates the degradation of transcripts by removing pyrophosphate from the 5'-end of triphosphorylated RNA, leading to a more labile monophosphorylated state that can stimulate subsequent ribonuclease cleavage. In Nitrosomonas eutropha (strain DSM 101675 / C91 / Nm57), this protein is RNA pyrophosphohydrolase.